The primary structure comprises 144 residues: UPF0735 ACT domain-containing protein LCABL_12100 (144 aa).

Positions 68-143 (VISLMLHHDR…GVSDVHLVSV (76 aa)) constitute an ACT domain.

This sequence belongs to the UPF0735 family.

This Lacticaseibacillus casei (strain BL23) (Lactobacillus casei) protein is UPF0735 ACT domain-containing protein LCABL_12100.